A 338-amino-acid polypeptide reads, in one-letter code: Inositol 2-dehydrogenase (338 aa).

This sequence belongs to the Gfo/Idh/MocA family. As to quaternary structure, homotetramer.

The catalysed reaction is myo-inositol + NAD(+) = scyllo-inosose + NADH + H(+). Functionally, involved in the oxidation of myo-inositol (MI) to 2-keto-myo-inositol (2KMI or 2-inosose). The protein is Inositol 2-dehydrogenase of Azotobacter vinelandii (strain DJ / ATCC BAA-1303).